The primary structure comprises 488 residues: MGIAHTEWESVIGLEVHVELNTESKLFSPARNHFGDEPNTNISPVCTGMPGSLPVLNKDAVRKAVLFGCAVEGDVALFSRFDRKSYFYPDSPRNFQITQYEHPIVRGGCIRAVVEGEEKTFELAQTHLEDDAGMLKHFGDFAGVDYNRAGVPLIEIVSKPCMFSAEDAVAYANALVSILGYIGISDCNMEEGSIRFDVNISVRPRGSRELRNKVEIKNMNSFTFMAQALEAEKRRQIEEYLSHPNEDPKKVVPAATYRWDPEKKKTVLMRLKERAEDYMYFVEPDLPVLQITETYIDEVRQTLPELPHSKYMRYITDFDIAEDLAMILVGDRHTAHFFETATMSCKNYRALSNWITVEFAGRCKAKGKTLPFTGILPEWVAQLVNFIDRGVITGKIAKEIADRMVSSFGESPEDILRRHPSLLPMTDDHALRAIVKEVVAQNTASVADYKNGKAKALGFLVGQIMKRTEGKAPPKRVNELLLAAMRDM.

Belongs to the GatB/GatE family. GatB subfamily. In terms of assembly, heterotrimer of A, B and C subunits.

The catalysed reaction is L-glutamyl-tRNA(Gln) + L-glutamine + ATP + H2O = L-glutaminyl-tRNA(Gln) + L-glutamate + ADP + phosphate + H(+). It carries out the reaction L-aspartyl-tRNA(Asn) + L-glutamine + ATP + H2O = L-asparaginyl-tRNA(Asn) + L-glutamate + ADP + phosphate + 2 H(+). In terms of biological role, allows the formation of correctly charged Asn-tRNA(Asn) or Gln-tRNA(Gln) through the transamidation of misacylated Asp-tRNA(Asn) or Glu-tRNA(Gln) in organisms which lack either or both of asparaginyl-tRNA or glutaminyl-tRNA synthetases. The reaction takes place in the presence of glutamine and ATP through an activated phospho-Asp-tRNA(Asn) or phospho-Glu-tRNA(Gln). This Chlamydia trachomatis serovar L2 (strain ATCC VR-902B / DSM 19102 / 434/Bu) protein is Aspartyl/glutamyl-tRNA(Asn/Gln) amidotransferase subunit B.